The following is a 135-amino-acid chain: Ribosome-binding factor A (135 aa).

This sequence belongs to the RbfA family. As to quaternary structure, monomer. Binds 30S ribosomal subunits, but not 50S ribosomal subunits or 70S ribosomes.

Its subcellular location is the cytoplasm. Functionally, one of several proteins that assist in the late maturation steps of the functional core of the 30S ribosomal subunit. Associates with free 30S ribosomal subunits (but not with 30S subunits that are part of 70S ribosomes or polysomes). Required for efficient processing of 16S rRNA. May interact with the 5'-terminal helix region of 16S rRNA. The chain is Ribosome-binding factor A from Aliivibrio fischeri (strain MJ11) (Vibrio fischeri).